Consider the following 134-residue polypeptide: MTLNLCVLTPNRIIWDSEVKEIILSTNSGQIGVLPNHAPIATAIDIGILRIRLDDQWLTMALMGGFARIGNNEITILVNDAEKGSDIDPQEAQRTLEIAEANLSKAEGKRQVIEANLALRRARARVEAINAISY.

This sequence belongs to the ATPase epsilon chain family. F-type ATPases have 2 components, CF(1) - the catalytic core - and CF(0) - the membrane proton channel. CF(1) has five subunits: alpha(3), beta(3), gamma(1), delta(1), epsilon(1). CF(0) has three main subunits: a, b and c.

Its subcellular location is the plastid. The protein resides in the chloroplast thylakoid membrane. In terms of biological role, produces ATP from ADP in the presence of a proton gradient across the membrane. This Nymphaea alba (White water-lily) protein is ATP synthase epsilon chain, chloroplastic.